A 222-amino-acid polypeptide reads, in one-letter code: Large ribosomal subunit protein bL25 (222 aa).

Belongs to the bacterial ribosomal protein bL25 family. CTC subfamily. As to quaternary structure, part of the 50S ribosomal subunit; part of the 5S rRNA/L5/L18/L25 subcomplex. Contacts the 5S rRNA. Binds to the 5S rRNA independently of L5 and L18.

Its function is as follows. This is one of the proteins that binds to the 5S RNA in the ribosome where it forms part of the central protuberance. The protein is Large ribosomal subunit protein bL25 of Ruthia magnifica subsp. Calyptogena magnifica.